Here is a 783-residue protein sequence, read N- to C-terminus: MESPGESGAGSPGAPSPSSFTTGHLAREKPAQDPLYDVPNASGGQAGGPQRPGRVVSLRERLLLTRPVWLQLQANAAAALHMLRTEPPGTFLVRKSNTRQCQALCMRLPEASGPSFVSSHYILESPGGVSLEGSELMFPDLVQLICAYCHTRDILLLPLQLPRAIHHAATHKELEAISHLGIEFWSSSLNIKAQRGPAGGPVLPQLKARSPQELDQGTGAALCFFNPLFPGDLGPTKREKFKRSFKVRVSTETSSPLSPPAVPPPPVPVLPGAVPSQTERLPPCQLLRRESSVGYRVPAGSGPSLPPMPSLQEVDCGSPSSSEEEGVPGSRGSPATSPHLGRRRPLLRSMSAAFCSLLAPERQVGRAAAALMQDRHTAAGQLVQDLLTQVRAGPEPQELQGIRQALSRARAMLSAELGPEKLLSPKRLEHVLEKSLHCSVLKPLRPILAARLRRRLAADGSLGRLAEGLRLARAQGPGAFGSHLSLPSPVELEQVRQKLLQLLRTYSPSAQVKRLLQACKLLYMALRTQEGEGAGADEFLPLLSLVLAHCDLPELLLEAEYMSELLEPSLLTGEGGYYLTSLSASLALLSGLGQAHTLPLSPVQELRRSLSLWEQRRLPATHCFQHLLRVAYQDPSSGCTSKTLAVPPEASIATLNQLCATKFRVTQPNTFGLFLYKEQGYHRLPPGALAHRLPTTGYLVYRRAEWPETQGAVTEEEGSGQSEARSRGEEQGCQGDGDAGVKASPRDIREQSETTAEGGQGQAQEGPAQPGEPEAEGSRAAEE.

Methionine 1 bears the N-acetylmethionine mark. The tract at residues 1–53 (MESPGESGAGSPGAPSPSSFTTGHLAREKPAQDPLYDVPNASGGQAGGPQRPG) is disordered. A phosphoserine mark is found at serine 3 and serine 16. Tyrosine 36 bears the Phosphotyrosine; by ABL1 and ABL2 mark. Residues 69–163 (WLQLQANAAA…ILLLPLQLPR (95 aa)) enclose the SH2 domain. Residues serine 210, serine 258, serine 333, and serine 337 each carry the phosphoserine modification. 2 disordered regions span residues 250-282 (STET…ERLP) and 295-342 (YRVP…HLGR). Pro residues predominate over residues 257 to 269 (LSPPAVPPPPVPV). Residues 294-727 (GYRVPAGSGP…GSGQSEARSR (434 aa)) form a ras and 14-3-3 protein binding region region. Positions 317–334 (GSPSSSEEEGVPGSRGSP) are enriched in low complexity. Phosphoserine; by PKD/PRKD1 is present on serine 351. One can recognise a VPS9 domain in the interval 456–598 (LAADGSLGRL…LSGLGQAHTL (143 aa)). Residues serine 609 and serine 611 each carry the phosphoserine modification. The Ras-associating domain occupies 624-706 (FQHLLRVAYQ…GYLVYRRAEW (83 aa)). The residue at position 692 (arginine 692) is an Omega-N-methylarginine. The segment at 709–783 (TQGAVTEEEG…EAEGSRAAEE (75 aa)) is disordered. A compositionally biased stretch (low complexity) spans 762–772 (QAQEGPAQPGE).

The protein belongs to the RIN (Ras interaction/interference) family. Interacts with the GTP-bound form of Ras proteins (NRAS, HRAS and KRAS). This interaction prevents the association between RAF1 and Ras. Interacts with 14-3-3 proteins YWHAB, YWHAE and YWHAZ when phosphorylated on Ser-351. Interacts with the SH3 domain of ABL1 and ABL2. Interacts with RAB5A. The interaction with Ras is probably regulated and antagonized by the interaction with 14-3-3 proteins. The interaction with 14-3-3 proteins is regulated by phosphorylation on Ser-351. In terms of processing, phosphorylated on tyrosine residues by ABL1 and ABL2. Phosphorylation at Ser-351 by PRKD1 induces interaction with 14-3-3 proteins. Expressed in all tissues examined with high levels in brain, placenta and pancreas.

The protein localises to the cytoplasm. It localises to the membrane. It is found in the cytoskeleton. Ras effector protein, which may serve as an inhibitory modulator of neuronal plasticity in aversive memory formation. Can affect Ras signaling at different levels. First, by competing with RAF1 protein for binding to activated Ras. Second, by enhancing signaling from ABL1 and ABL2, which regulate cytoskeletal remodeling. Third, by activating RAB5A, possibly by functioning as a guanine nucleotide exchange factor (GEF) for RAB5A, by exchanging bound GDP for free GTP, and facilitating Ras-activated receptor endocytosis. The chain is Ras and Rab interactor 1 (RIN1) from Homo sapiens (Human).